A 651-amino-acid chain; its full sequence is Probable potassium transport system protein Kup (651 aa).

12 consecutive transmembrane segments (helical) span residues Leu-41–Phe-61, Val-82–Val-102, Leu-130–Pro-150, Ile-163–Leu-183, Val-194–Leu-214, Phe-235–Thr-255, Trp-276–Leu-296, Met-309–Ala-329, Ile-366–Phe-386, Ala-395–Met-415, Ala-426–Ile-446, and Glu-450–Val-470.

Belongs to the HAK/KUP transporter (TC 2.A.72) family.

It is found in the cell inner membrane. It catalyses the reaction K(+)(in) + H(+)(in) = K(+)(out) + H(+)(out). In terms of biological role, transport of potassium into the cell. Likely operates as a K(+):H(+) symporter. The sequence is that of Probable potassium transport system protein Kup from Brucella ovis (strain ATCC 25840 / 63/290 / NCTC 10512).